A 405-amino-acid polypeptide reads, in one-letter code: Diaminopimelate decarboxylase (405 aa).

Position 46 is an N6-(pyridoxal phosphate)lysine (Lys-46). Pyridoxal 5'-phosphate-binding positions include Gly-225 and 259-262; that span reads EPGR. Residues Arg-262, Arg-298, and Tyr-302 each contribute to the substrate site. The active-site Proton donor is the Cys-329. Residues Glu-330 and Tyr-358 each coordinate substrate. Tyr-358 lines the pyridoxal 5'-phosphate pocket.

The protein belongs to the Orn/Lys/Arg decarboxylase class-II family. LysA subfamily. Homodimer. The cofactor is pyridoxal 5'-phosphate.

The catalysed reaction is meso-2,6-diaminopimelate + H(+) = L-lysine + CO2. Its pathway is amino-acid biosynthesis; L-lysine biosynthesis via DAP pathway; L-lysine from DL-2,6-diaminopimelate: step 1/1. Specifically catalyzes the decarboxylation of meso-diaminopimelate (meso-DAP) to L-lysine. This is Diaminopimelate decarboxylase from Helicobacter pylori (strain J99 / ATCC 700824) (Campylobacter pylori J99).